Here is a 375-residue protein sequence, read N- to C-terminus: MGASEEMKVLERVPVSKPPFEYNDLKKAVPPHCFTRSLSLSFYYLFYDLIKVCILFYVASKYIPMLPYSLSCIVWPLYWFFQGAFLGRLWMIGHECGHHSFSNYRWLDDTVGFLVHTATLTPYFSFKYSHRNHHAHTNSLEYDEVHVPKIRKFKSEHLYSEFLTNNPFGLVVNMVFELTFGYPSYLIFNYSGRKLTQAGFASHLYPQSPIFNDSERNHVFFSDVGICIVLYALYRIAIAKGAMLVLYVYGLPWVVMSAFIFSLTYLQHTHPSIPHYDSTEWNWLRGALSSIDRELAGAFNIKKTHYHVVHHLFPFIPEYHAHDATEALKPILGPYYKYDGTPFYKALWREMKDCLYVESDDGPNKTGVYWFKTKT.

Transmembrane regions (helical) follow at residues 38 to 58 (LSLSFYYLFYDLIKVCILFYV) and 66 to 86 (LPYSLSCIVWPLYWFFQGAFL). The Histidine box-1 motif lies at 94–98 (HECGH). The Histidine box-2 signature appears at 130-134 (HRNHH). 3 helical membrane-spanning segments follow: residues 168–188 (FGLVVNMVFELTFGYPSYLIF), 219–239 (VFFSDVGICIVLYALYRIAIA), and 241–261 (GAMLVLYVYGLPWVVMSAFIF). Residues 307–311 (HVVHH) carry the Histidine box-3 motif.

Belongs to the fatty acid desaturase type 1 family.

Its subcellular location is the membrane. Its function is as follows. Involved in the biosynthesis of dimorphecolic acid (9-OH-18:2(10E,12E)). Catalyzes the formation of the C-9 hydroxyl group and the (E)-delta(10) double bond from the trans-linoleic acid (16:2(9Z,12E)) produced by FAD2-1. Very limited activity with cis-linoleic acid (16:2(9Z,12Z)). This Dimorphotheca sinuata (African daisy) protein is Delta(9) fatty acid conjugase-like enzyme.